Consider the following 94-residue polypeptide: Mitochondrial import receptor subunit TOM9-1 (94 aa).

Topologically, residues 1–48 are cytoplasmic; the sequence is MAPKKIGAGKGDSSILAKISNYDIVSQGRRAACDAVYVSKKLLKSTGK. Residues 49 to 66 traverse the membrane as a helical segment; it reads AAWIAGTTFLILAVPLIL. Residues 67–94 lie on the Mitochondrial intermembrane side of the membrane; that stretch reads ELEQDHRLGEIDFEQASLLGTPPVGAML.

The protein belongs to the Tom22 family. In terms of assembly, forms part of the preprotein translocase complex of the outer mitochondrial membrane (TOM complex) which consists of at least 6 different proteins (TOM5, TOM6, TOM7, TOM20, TOM22/TOM9 and TOM40). In terms of tissue distribution, expressed in roots, flowers, young cotyledons and leaves.

Its subcellular location is the mitochondrion outer membrane. Its function is as follows. Central component of the receptor complex responsible for the recognition and translocation of cytosolically synthesized mitochondrial preproteins. Together with TOM20 functions as the transit peptide receptor at the surface of the mitochondrion outer membrane and facilitates the movement of preproteins into the translocation pore. This chain is Mitochondrial import receptor subunit TOM9-1 (TOM9-1), found in Arabidopsis thaliana (Mouse-ear cress).